The chain runs to 431 residues: MKICLVGYGKSNNELLTKLLKSNHEIFVSQDKDFTKTDEIYFKKNNIQYETNHNDLLKNCDLAIVSPGIPPNSKAAKIIFENNIDYTTELEYSWQNIKKENKKAVFIGITGTDGKSTTTSLIGHILKFADPLTFVGGNIGVPLAKASETLNYYVVEVSSFQIFWSKTFTPEISVLTNLAPDHLNWHKDLNDYYQTKAKLLLRTLKSGGVAVVNEDAVNLLNLKDYQASERIITFSKNMIEGNYIKYKDKKIQVNNKIFELDIFKEDILASAVTTLNLGISEKIIEEAINSFKPLKYRLELIKSKNGVNYYNDSKATNVHSAYNAYKSFRGMHYIAILSGIPKNEDLTPLIEELKTYAKAVIVFGEMEKEVKKYPLNSKFIFKNNLEEVFLYLSEICEVGDNVVFSPAGASFDKYKNYEERGEHFNLLVEKS.

111–117 (GTDGKST) serves as a coordination point for ATP.

Belongs to the MurCDEF family.

Its subcellular location is the cytoplasm. It carries out the reaction UDP-N-acetyl-alpha-D-muramoyl-L-alanine + D-glutamate + ATP = UDP-N-acetyl-alpha-D-muramoyl-L-alanyl-D-glutamate + ADP + phosphate + H(+). The protein operates within cell wall biogenesis; peptidoglycan biosynthesis. In terms of biological role, cell wall formation. Catalyzes the addition of glutamate to the nucleotide precursor UDP-N-acetylmuramoyl-L-alanine (UMA). In Petrotoga mobilis (strain DSM 10674 / SJ95), this protein is UDP-N-acetylmuramoylalanine--D-glutamate ligase.